A 231-amino-acid polypeptide reads, in one-letter code: Phosphoribosylformylglycinamidine synthase subunit PurQ (231 aa).

One can recognise a Glutamine amidotransferase type-1 domain in the interval 3-231; the sequence is FGVLIFPGSN…ESMVGAMAKR (229 aa). Cys86 (nucleophile) is an active-site residue. Catalysis depends on residues His203 and Glu205.

In terms of assembly, part of the FGAM synthase complex composed of 1 PurL, 1 PurQ and 2 PurS subunits.

The protein resides in the cytoplasm. The enzyme catalyses N(2)-formyl-N(1)-(5-phospho-beta-D-ribosyl)glycinamide + L-glutamine + ATP + H2O = 2-formamido-N(1)-(5-O-phospho-beta-D-ribosyl)acetamidine + L-glutamate + ADP + phosphate + H(+). It catalyses the reaction L-glutamine + H2O = L-glutamate + NH4(+). Its pathway is purine metabolism; IMP biosynthesis via de novo pathway; 5-amino-1-(5-phospho-D-ribosyl)imidazole from N(2)-formyl-N(1)-(5-phospho-D-ribosyl)glycinamide: step 1/2. Functionally, part of the phosphoribosylformylglycinamidine synthase complex involved in the purines biosynthetic pathway. Catalyzes the ATP-dependent conversion of formylglycinamide ribonucleotide (FGAR) and glutamine to yield formylglycinamidine ribonucleotide (FGAM) and glutamate. The FGAM synthase complex is composed of three subunits. PurQ produces an ammonia molecule by converting glutamine to glutamate. PurL transfers the ammonia molecule to FGAR to form FGAM in an ATP-dependent manner. PurS interacts with PurQ and PurL and is thought to assist in the transfer of the ammonia molecule from PurQ to PurL. The chain is Phosphoribosylformylglycinamidine synthase subunit PurQ from Koribacter versatilis (strain Ellin345).